Reading from the N-terminus, the 28-residue chain is Potassium channel toxin alpha-KTx 9.10 (28 aa).

Cystine bridges form between cysteine 3–cysteine 19, cysteine 6–cysteine 24, and cysteine 10–cysteine 26.

This sequence belongs to the short scorpion toxin superfamily. Potassium channel inhibitor family. Alpha-KTx 09 subfamily. In terms of tissue distribution, expressed by the venom gland.

It is found in the secreted. Its function is as follows. Blocks Shaker potassium channels. This Mesobuthus eupeus (Lesser Asian scorpion) protein is Potassium channel toxin alpha-KTx 9.10.